Reading from the N-terminus, the 553-residue chain is Phosphoenolpyruvate carboxykinase (ATP) (553 aa).

The tract at residues 1–22 (MAPPTAVGSSINFEGHPTIKST) is disordered. 255-262 (GLSGTGKT) serves as a coordination point for ATP.

It belongs to the phosphoenolpyruvate carboxykinase (ATP) family.

It catalyses the reaction oxaloacetate + ATP = phosphoenolpyruvate + ADP + CO2. The protein operates within carbohydrate biosynthesis; gluconeogenesis. In Candida albicans (Yeast), this protein is Phosphoenolpyruvate carboxykinase (ATP) (PCK1).